The sequence spans 163 residues: Neurotrophin-3 (163 aa).

Residues 1-3 form the signal peptide; that stretch reads IQS. A propeptide spanning residues 4 to 119 is cleaved from the precursor; that stretch reads TSMDQGILTE…VLNRTSRRKR (116 aa). Residues 35–61 form a disordered region; the sequence is KQTARTKDGTQTTVKKSEAEADATASQ. N-linked (GlcNAc...) asparagine glycosylation occurs at Asn112.

The protein belongs to the NGF-beta family.

The protein localises to the secreted. Seems to promote the survival of visceral and proprioceptive sensory neurons. The protein is Neurotrophin-3 (NTF3) of Corallus caninus (Emerald tree boa).